The chain runs to 258 residues: uncharacterized protein (258 aa).

Over residues 40-54 the composition is skewed to polar residues; that stretch reads AQKTDTPLDSSSYAV. The disordered stretch occupies residues 40 to 63; it reads AQKTDTPLDSSSYAVTSPEEAPNE.

This is an uncharacterized protein from Treponema pallidum (strain Nichols).